The sequence spans 123 residues: Small ribosomal subunit protein uS12cz/uS12cy (123 aa).

This sequence belongs to the universal ribosomal protein uS12 family. As to quaternary structure, part of the 30S ribosomal subunit.

It is found in the plastid. The protein localises to the chloroplast. With S4 and S5 plays an important role in translational accuracy. Located at the interface of the 30S and 50S subunits. This is Small ribosomal subunit protein uS12cz/uS12cy (rps12-A) from Gossypium barbadense (Sea Island cotton).